A 331-amino-acid chain; its full sequence is Phosphate acyltransferase (331 aa).

This sequence belongs to the PlsX family. In terms of assembly, homodimer. Probably interacts with PlsY.

Its subcellular location is the cytoplasm. The enzyme catalyses a fatty acyl-[ACP] + phosphate = an acyl phosphate + holo-[ACP]. It functions in the pathway lipid metabolism; phospholipid metabolism. Functionally, catalyzes the reversible formation of acyl-phosphate (acyl-PO(4)) from acyl-[acyl-carrier-protein] (acyl-ACP). This enzyme utilizes acyl-ACP as fatty acyl donor, but not acyl-CoA. This Lactococcus lactis subsp. lactis (strain IL1403) (Streptococcus lactis) protein is Phosphate acyltransferase.